A 253-amino-acid polypeptide reads, in one-letter code: Neurotrophin-3 (253 aa).

A signal peptide spans 1 to 18 (MSILFYVMFLAYLRGVQG). Positions 19-134 (NSMDQRSLPE…AANRTSRRKR (116 aa)) are excised as a propeptide. Positions 62-89 (TLPKAEAPPREPAKSEFQPVTAMGPELL) are disordered. N-linked (GlcNAc...) asparagine glycosylation occurs at asparagine 127. 3 disulfides stabilise this stretch: cysteine 148–cysteine 213, cysteine 191–cysteine 242, and cysteine 201–cysteine 244.

This sequence belongs to the NGF-beta family.

It localises to the secreted. Functionally, seems to promote the survival of visceral and proprioceptive sensory neurons. This Bos taurus (Bovine) protein is Neurotrophin-3 (NTF3).